Consider the following 266-residue polypeptide: Transcription regulator FGM4 (266 aa).

Residues 17–36 (KTQNRLAKRKSRIHAGKQQG) are disordered. Residues 18 to 31 (TQNRLAKRKSRIHA) show a composition bias toward basic residues. ANK repeat units lie at residues 183-212 (KPGS…NVNE) and 216-245 (AGYS…DWSY).

It is found in the nucleus. Functionally, transcription regulator; part of the Fg3_54/C64 gene cluster that mediates the biosynthesis of the octapeptide fusaoctaxin A, a virulence factor that is required for cell-to-cell invasiveness of plant host. Positively regulates the expression the Fg3_54/C64 gene cluster. The sequence is that of Transcription regulator FGM4 from Gibberella zeae (strain ATCC MYA-4620 / CBS 123657 / FGSC 9075 / NRRL 31084 / PH-1) (Wheat head blight fungus).